Consider the following 246-residue polypeptide: Large ribosomal subunit protein uL2 (246 aa).

Positions 196–226 are disordered; that stretch reads MSPYAHPHGGGSHQKGGTPVPKTAPPGQKVG.

The protein belongs to the universal ribosomal protein uL2 family. In terms of assembly, part of the 50S ribosomal subunit. Forms a bridge to the 30S subunit in the 70S ribosome.

One of the primary rRNA binding proteins. Required for association of the 30S and 50S subunits to form the 70S ribosome, for tRNA binding and peptide bond formation. It has been suggested to have peptidyltransferase activity; this is somewhat controversial. Makes several contacts with the 16S rRNA in the 70S ribosome. The sequence is that of Large ribosomal subunit protein uL2 from Pyrobaculum arsenaticum (strain DSM 13514 / JCM 11321 / PZ6).